Reading from the N-terminus, the 160-residue chain is Phosphopantetheine adenylyltransferase (160 aa).

Residue S10 coordinates substrate. ATP-binding positions include 10-11 (SF) and H18. K42, L74, and R88 together coordinate substrate. ATP contacts are provided by residues 89-91 (GLR), E99, and 124-130 (YSFLSSS).

The protein belongs to the bacterial CoaD family. As to quaternary structure, homohexamer. Mg(2+) is required as a cofactor.

The protein localises to the cytoplasm. It catalyses the reaction (R)-4'-phosphopantetheine + ATP + H(+) = 3'-dephospho-CoA + diphosphate. It functions in the pathway cofactor biosynthesis; coenzyme A biosynthesis; CoA from (R)-pantothenate: step 4/5. Its function is as follows. Reversibly transfers an adenylyl group from ATP to 4'-phosphopantetheine, yielding dephospho-CoA (dPCoA) and pyrophosphate. This is Phosphopantetheine adenylyltransferase from Bacillus pumilus (strain SAFR-032).